A 1425-amino-acid chain; its full sequence is Nephrocystin-4 (1425 aa).

Position 145 is a phosphoserine (Ser-145). A disordered region spans residues 448 to 554 (FSLSSDGPTE…VSHLEADLSQ (107 aa)). 2 stretches are compositionally biased toward low complexity: residues 473–484 (PASPSGTPAPAA) and 507–530 (SPLSPALQSSSKPPLQPPDSSQSP). A sufficient for basal bodies localization region spans residues 822–1425 (LTLANVGHAC…ETFCVKVLYQ (604 aa)).

The protein belongs to the NPHP4 family. As to quaternary structure, interacts with NPHP1 and RPGRIP1L/NPHP8; NPHP1, NPHP4 and RPGRIP1L are proposed to form a functional NPHP1-4-8 module localized to cell-cell contacts and the ciliary transition zone; NPHP4 mediates the interaction between NPHP1 and RPGRIP1L. Interacts with IQCB1/NPHP5; the interaction likely requires additional interactors. Interacts with RPGRIP1, CEP164, JADE1, PALS1, INADL, PARD6A, INVS, DVL2. Interacts with INTU; INTU mediates the interaction between NPHP4 and DAAM1. Interacts with JADE1. Interacts with SPATA7. Expressed in the retina (at protein level).

The protein localises to the cytoplasm. The protein resides in the cytoskeleton. It is found in the cilium basal body. Its subcellular location is the microtubule organizing center. It localises to the centrosome. The protein localises to the cell junction. The protein resides in the tight junction. In terms of biological role, involved in the organization of apical junctions; the function is proposed to implicate a NPHP1-4-8 module. Does not seem to be strictly required for ciliogenesis. Required for building functional cilia. Involved in the organization of the subapical actin network in multiciliated epithelial cells. Seems to recruit INT to basal bodies of motile cilia which subsequently interacts with actin-modifying proteins such as DAAM1. In cooperation with INVS may down-regulate the canonical Wnt pathway and promote the Wnt-PCP pathway by regulating expression and subcellular location of disheveled proteins. Stabilizes protein levels of JADE1 and promotes its translocation to the nucleus leading to cooperative inhibition of canonical Wnt signaling. Acts as negative regulator of the hippo pathway by association with LATS1 and modifying LATS1-dependent phosphorylation and localization of WWTR1/TAZ. In Mus musculus (Mouse), this protein is Nephrocystin-4 (Nphp4).